The following is a 333-amino-acid chain: Dipeptide transport system permease protein DppB (333 aa).

6 consecutive transmembrane segments (helical) span residues 10–30 (LLLI…IHLI), 99–119 (IELT…AGIV), 130–150 (YLSM…LALM), 197–217 (SIKH…AIIA), 256–276 (LIPV…GAIL), and 300–320 (PVIQ…NLFV). One can recognise an ABC transmembrane type-1 domain in the interval 95–324 (LAATIELTIF…LINLFVDLLY (230 aa)).

Belongs to the binding-protein-dependent transport system permease family. OppBC subfamily.

The protein resides in the cell membrane. Functionally, probably part of the ABC transporter Dpp involved in dipeptide transport. Responsible for the translocation of the substrate across the membrane. The chain is Dipeptide transport system permease protein DppB (dppB) from Alkalihalophilus pseudofirmus (strain ATCC BAA-2126 / JCM 17055 / OF4) (Bacillus pseudofirmus).